The following is a 131-amino-acid chain: Profilin-3 (131 aa).

It belongs to the profilin family. Occurs in many kinds of cells as a complex with monomeric actin in a 1:1 ratio.

The protein localises to the cytoplasm. It is found in the cytoskeleton. Its function is as follows. Binds to actin and affects the structure of the cytoskeleton. At high concentrations, profilin prevents the polymerization of actin, whereas it enhances it at low concentrations. By binding to PIP2, it inhibits the formation of IP3 and DG. The sequence is that of Profilin-3 from Lilium longiflorum (Trumpet lily).